The following is a 225-amino-acid chain: MSRKKAVILVSGGLDSTTVIAIARSQGYDCYTISFDYGQRHRAELKAAEITAKAHGSLEHKVIRLDLGAIGGSALTDTSIDVPEEETSGIPVTYVPARNTVFLSIALGWAEVLGALDIFIGVNAVDYSGYPDCRPDYIAAYETMANLATKRGIEGERLHIRTPLINLTKAQIIQQGLALGVDYRLTVSCYQANDGGEACGKCDSCRLRKQGFEQAGVADPTRYAF.

10 to 20 (VSGGLDSTTVI) lines the ATP pocket. Residues Cys-189, Cys-199, Cys-202, and Cys-205 each contribute to the Zn(2+) site.

Belongs to the QueC family. The cofactor is Zn(2+).

The catalysed reaction is 7-carboxy-7-deazaguanine + NH4(+) + ATP = 7-cyano-7-deazaguanine + ADP + phosphate + H2O + H(+). Its pathway is purine metabolism; 7-cyano-7-deazaguanine biosynthesis. In terms of biological role, catalyzes the ATP-dependent conversion of 7-carboxy-7-deazaguanine (CDG) to 7-cyano-7-deazaguanine (preQ(0)). In Cellvibrio japonicus (strain Ueda107) (Pseudomonas fluorescens subsp. cellulosa), this protein is 7-cyano-7-deazaguanine synthase.